We begin with the raw amino-acid sequence, 374 residues long: Nucleosome assembly protein 1;1 (374 aa).

Residues 26–80 (VNALKNKLQDITGKPTNVLECLSPNVRKRVEVLKEIQSQHDELEAKFYEERAVLE) adopt a coiled-coil conformation. Residues 47 to 62 (LSPNVRKRVEVLKEIQ) carry the Nuclear export signal motif. Positions 223–228 (KKKPKK) match the Nuclear localization signal motif. The segment covering 299–339 (AAEDDFADLEDDDDDDEEDDDDEDEEEEDDEDDEDEEDEDD) has biased composition (acidic residues). A disordered region spans residues 299–374 (AAEDDFADLE…GERPPECKQQ (76 aa)). Residues 343 to 355 (KKKSSAVRKRGVR) are compositionally biased toward basic residues. Cysteine 371 bears the Cysteine methyl ester mark. The S-farnesyl cysteine moiety is linked to residue cysteine 371. A propeptide spans 372–374 (KQQ) (removed in mature form).

This sequence belongs to the nucleosome assembly protein (NAP) family. As to quaternary structure, binds preferentially histones H4 and H1 in vitro. Interacts with CYCB1;1.

Its subcellular location is the nucleus. The protein localises to the cytoplasm. May modulate chromatin structure by regulation of nucleosome assembly/disassembly. Could function together with B-type cyclins in the regulation of microtubule dynamics. This chain is Nucleosome assembly protein 1;1 (NAP1;1), found in Nicotiana tabacum (Common tobacco).